A 267-amino-acid chain; its full sequence is Indole-3-glycerol phosphate synthase (267 aa).

The protein belongs to the TrpC family.

The enzyme catalyses 1-(2-carboxyphenylamino)-1-deoxy-D-ribulose 5-phosphate + H(+) = (1S,2R)-1-C-(indol-3-yl)glycerol 3-phosphate + CO2 + H2O. Its pathway is amino-acid biosynthesis; L-tryptophan biosynthesis; L-tryptophan from chorismate: step 4/5. This chain is Indole-3-glycerol phosphate synthase, found in Deinococcus radiodurans (strain ATCC 13939 / DSM 20539 / JCM 16871 / CCUG 27074 / LMG 4051 / NBRC 15346 / NCIMB 9279 / VKM B-1422 / R1).